The sequence spans 670 residues: Oligopeptidase PepF (670 aa).

His-456 provides a ligand contact to Zn(2+). Residue Glu-457 is part of the active site. Zn(2+) is bound by residues His-460 and His-463.

It belongs to the peptidase M3B family. It depends on Zn(2+) as a cofactor.

It is found in the cytoplasm. Overexpression results in inhibition of sporulation initiation. This sporulation deficiency could be the result of hydrolysis by PepF of the PhrA peptide, a phosphatase regulator. Thus, overexpression of PepF appears to act at the level of the phosphorelay, most likely through modulation of the negative role played by phosphatases. Overexpression of PepF also affects the activity of the competence and sporulation stimulating factor PhrC. In Bacillus subtilis (strain 168), this protein is Oligopeptidase PepF.